The following is a 739-amino-acid chain: Poly(A) polymerase gamma (739 aa).

An N6-acetyllysine modification is found at K2. At S23 the chain carries Phosphoserine. ATP is bound by residues 99–101 (FGS), T108, 112–114 (DID), D166, K227, Y236, and 245–246 (GV). 3 residues coordinate Mg(2+): D112, D114, and D166. A disordered region spans residues 506–566 (KSLSDVSRSS…PTGEIERSSA (61 aa)). 2 stretches are compositionally biased toward polar residues: residues 509–531 (SDVSRSSGGLQSKRSSLDSTCLD) and 538–556 (SGTPFNSPVSANKPSNPDS). Residue S524 is modified to Phosphoserine. Phosphoserine is present on residues S602 and S651. T657 carries the post-translational modification Phosphothreonine. The span at 677 to 688 (SRAAEDRKRKPM) shows a compositional bias: basic and acidic residues. The disordered stretch occupies residues 677–725 (SRAAEDRKRKPMDSIGGESMPIPTIDTARKKRLPSKELPDSSSPVPANN). S711 bears the Phosphoserine mark.

Belongs to the poly(A) polymerase family. Mg(2+) is required as a cofactor. Requires Mn(2+) as cofactor.

It localises to the nucleus. It catalyses the reaction RNA(n) + ATP = RNA(n)-3'-adenine ribonucleotide + diphosphate. Responsible for the post-transcriptional adenylation of the 3'-terminal of mRNA precursors and several small RNAs including signal recognition particle (SRP) RNA, nuclear 7SK RNA, U2 small nuclear RNA, and ribosomal 5S RNA. The polypeptide is Poly(A) polymerase gamma (Papolg) (Mus musculus (Mouse)).